Consider the following 454-residue polypeptide: Kynurenine--oxoglutarate transaminase 3 (454 aa).

Substrate is bound at residue G71. N6-acetyllysine; alternate is present on K116. K116 bears the N6-succinyllysine; alternate mark. A substrate-binding site is contributed by N218. Position 280 is an N6-(pyridoxal phosphate)lysine (K280). R429 serves as a coordination point for substrate.

Belongs to the class-I pyridoxal-phosphate-dependent aminotransferase family. In terms of assembly, homodimer. The cofactor is pyridoxal 5'-phosphate.

The catalysed reaction is L-kynurenine + 2-oxoglutarate = kynurenate + L-glutamate + H2O. It carries out the reaction L-kynurenine + glyoxylate = kynurenate + glycine + H2O. The enzyme catalyses 3-hydroxy-L-kynurenine + glyoxylate = xanthurenate + glycine + H2O. It catalyses the reaction an S-substituted L-cysteine + H2O = a thiol + pyruvate + NH4(+). Its pathway is amino-acid degradation; L-kynurenine degradation; kynurenate from L-kynurenine: step 1/2. Its function is as follows. Catalyzes the irreversible transamination of the L-tryptophan metabolite L-kynurenine to form kynurenic acid (KA), an intermediate in the tryptophan catabolic pathway which is also a broad spectrum antagonist of the three ionotropic excitatory amino acid receptors among others. May catalyze the beta-elimination of S-conjugates and Se-conjugates of L-(seleno)cysteine, resulting in the cleavage of the C-S or C-Se bond. Has transaminase activity towards L-kynurenine, tryptophan, phenylalanine, serine, cysteine, methionine, histidine, glutamine and asparagine with glyoxylate as an amino group acceptor (in vitro). Has lower activity with 2-oxoglutarate as amino group acceptor (in vitro). This chain is Kynurenine--oxoglutarate transaminase 3, found in Rattus norvegicus (Rat).